The sequence spans 323 residues: tRNA U34 carboxymethyltransferase (323 aa).

Carboxy-S-adenosyl-L-methionine contacts are provided by residues lysine 91, tryptophan 105, lysine 110, glycine 130, 152-154, 181-182, methionine 196, tyrosine 200, and arginine 315; these read DPT and IE.

Belongs to the class I-like SAM-binding methyltransferase superfamily. CmoB family. As to quaternary structure, homotetramer.

It carries out the reaction carboxy-S-adenosyl-L-methionine + 5-hydroxyuridine(34) in tRNA = 5-carboxymethoxyuridine(34) in tRNA + S-adenosyl-L-homocysteine + H(+). In terms of biological role, catalyzes carboxymethyl transfer from carboxy-S-adenosyl-L-methionine (Cx-SAM) to 5-hydroxyuridine (ho5U) to form 5-carboxymethoxyuridine (cmo5U) at position 34 in tRNAs. This Salmonella gallinarum (strain 287/91 / NCTC 13346) protein is tRNA U34 carboxymethyltransferase.